Here is a 418-residue protein sequence, read N- to C-terminus: Glutamyl-tRNA reductase (418 aa).

Residues 49–52 (TCNR), Ser109, 114–116 (EPQ), and Gln120 each bind substrate. The Nucleophile role is filled by Cys50. 189 to 194 (GAGETI) lines the NADP(+) pocket.

The protein belongs to the glutamyl-tRNA reductase family. Homodimer.

It catalyses the reaction (S)-4-amino-5-oxopentanoate + tRNA(Glu) + NADP(+) = L-glutamyl-tRNA(Glu) + NADPH + H(+). The protein operates within porphyrin-containing compound metabolism; protoporphyrin-IX biosynthesis; 5-aminolevulinate from L-glutamyl-tRNA(Glu): step 1/2. In terms of biological role, catalyzes the NADPH-dependent reduction of glutamyl-tRNA(Glu) to glutamate 1-semialdehyde (GSA). This is Glutamyl-tRNA reductase from Enterobacter sp. (strain 638).